The sequence spans 537 residues: Glutamyl-tRNA(Gln) amidotransferase subunit A, chloroplastic/mitochondrial (537 aa).

Catalysis depends on charge relay system residues Lys116 and Ser191. Ser215 acts as the Acyl-ester intermediate in catalysis.

Belongs to the amidase family. GatA subfamily. As to quaternary structure, subunit of the heterotrimeric GatCAB amidotransferase (AdT) complex, composed of A, B and C subunits.

It is found in the mitochondrion. Its subcellular location is the plastid. It localises to the chloroplast stroma. It catalyses the reaction L-glutamyl-tRNA(Gln) + L-glutamine + ATP + H2O = L-glutaminyl-tRNA(Gln) + L-glutamate + ADP + phosphate + H(+). Allows the formation of correctly charged Gln-tRNA(Gln) through the transamidation of misacylated Glu-tRNA(Gln) in chloroplasts and mitochondria. The reaction takes place in the presence of glutamine and ATP through an activated gamma-phospho-Glu-tRNA(Gln). The polypeptide is Glutamyl-tRNA(Gln) amidotransferase subunit A, chloroplastic/mitochondrial (Arabidopsis thaliana (Mouse-ear cress)).